A 485-amino-acid chain; its full sequence is Hydrogenase transcriptional regulatory protein HoxA (485 aa).

Residues 6–120 form the Response regulatory domain; the sequence is TILVVDDEVR…QLVETVKEAV (115 aa). The residue at position 54 (D54) is a 4-aspartylphosphate. The Sigma-54 factor interaction domain maps to 166–392; sequence STESPMHAVI…ELQNEIQRMA (227 aa). ATP-binding positions include 192-199 and 264-273; these read GESGTGKE and EIGETSPAFQ. Positions 404–426 are disordered; the sequence is PLLGRRNGKRSAPLPAHGRLNGS. Positions 451–470 form a DNA-binding region, H-T-H motif; sequence NISRVASELGLSRVGLRNKL.

It localises to the cytoplasm. Its function is as follows. Probable member of the two-component regulatory system involved in the regulation of the hydrogenase activity. HoxA is probably phosphorylated by a sensory component (which could be HoxX) and then acts in conjunction with sigma-54 as a transcriptional activator. This chain is Hydrogenase transcriptional regulatory protein HoxA (hoxA), found in Bradyrhizobium diazoefficiens (strain JCM 10833 / BCRC 13528 / IAM 13628 / NBRC 14792 / USDA 110).